The sequence spans 61 residues: Small ribosomal subunit protein uS14 (61 aa).

Zn(2+)-binding residues include Cys-24, Cys-27, Cys-40, and Cys-43.

It belongs to the universal ribosomal protein uS14 family. Zinc-binding uS14 subfamily. Part of the 30S ribosomal subunit. Contacts proteins S3 and S10. It depends on Zn(2+) as a cofactor.

In terms of biological role, binds 16S rRNA, required for the assembly of 30S particles and may also be responsible for determining the conformation of the 16S rRNA at the A site. The polypeptide is Small ribosomal subunit protein uS14 (Thermosipho melanesiensis (strain DSM 12029 / CIP 104789 / BI429)).